The sequence spans 328 residues: Sulfate adenylyltransferase subunit 2 (328 aa).

Disordered stretches follow at residues 15 to 34 and 304 to 328; these read AAPDLADLGGEPARARPSSH and SEREGRVIDRDSTASMERKKAEGYF.

It belongs to the PAPS reductase family. CysD subfamily. Heterodimer composed of CysD, the smaller subunit, and CysN.

It catalyses the reaction sulfate + ATP + H(+) = adenosine 5'-phosphosulfate + diphosphate. It participates in sulfur metabolism; hydrogen sulfide biosynthesis; sulfite from sulfate: step 1/3. Functionally, with CysN forms the ATP sulfurylase (ATPS) that catalyzes the adenylation of sulfate producing adenosine 5'-phosphosulfate (APS) and diphosphate, the first enzymatic step in sulfur assimilation pathway. APS synthesis involves the formation of a high-energy phosphoric-sulfuric acid anhydride bond driven by GTP hydrolysis by CysN coupled to ATP hydrolysis by CysD. The polypeptide is Sulfate adenylyltransferase subunit 2 (Rhodopseudomonas palustris (strain BisA53)).